Consider the following 391-residue polypeptide: Mycofactocin maturase MftC (391 aa).

Positions 16-232 (LDAPICLTWE…KGERVLTGDS (217 aa)) constitute a Radical SAM core domain. [4Fe-4S] cluster-binding residues include C30, C34, C37, C251, C258, C269, C310, C313, C319, C323, and C341. The segment at 340-391 (ECVQGHSEPALARERHLPRPRADHSRGRRVSKPVPLTLSMRPPKRPCNESPV) is disordered. Residues 350–364 (LARERHLPRPRADHS) are compositionally biased toward basic and acidic residues.

The protein belongs to the radical SAM superfamily. [4Fe-4S] cluster serves as cofactor.

It carries out the reaction [mycofactocin precursor peptide]-C-terminal glycyl-L-valyl-L-tyrosine + S-adenosyl-L-methionine = [mycofactocin precursor peptide]-C-terminal glycyl-N-{[2-(4-hydroxyphenyl)ethenyl]-3-methylbutanamide} + 5'-deoxyadenosine + L-methionine + CO2. The catalysed reaction is [mycofactocin precursor peptide]-C-terminal glycyl-N-{[2-(4-hydroxyphenyl)ethenyl]-3-methylbutanamide} + AH2 + S-adenosyl-L-methionine = [mycofactocin precursor peptide]-C-terminal glycyl-N-{5-[(4-hydroxyphenyl)methyl]-4,4-dimethyl-2-oxopyrrolidin-3-yl}acetamide + 5'-deoxyadenosine + L-methionine + A + H(+). Radical S-adenosylmethionine (SAM) enzyme responsible for the first step of the biosynthesis of the enzyme cofactor mycofactocin (MFT). Catalyzes two reactions at the C-terminus of the mycofactocin precursor (the MftA peptide). The first one is the oxidative decarboxylation of the C-terminal L-tyrosine of MftA, forming an unsaturated tyramine moiety. The second reaction is the cross-linking of the tyramine with the penultimate L-valine residue, forming a five-membered lactam ring. Its activity requires the presence of the MftB chaperone. This chain is Mycofactocin maturase MftC (mftC), found in Mycobacterium tuberculosis (strain CDC 1551 / Oshkosh).